The following is a 176-amino-acid chain: Large ribosomal subunit protein uL10 (176 aa).

It belongs to the universal ribosomal protein uL10 family. Part of the ribosomal stalk of the 50S ribosomal subunit. The N-terminus interacts with L11 and the large rRNA to form the base of the stalk. The C-terminus forms an elongated spine to which L12 dimers bind in a sequential fashion forming a multimeric L10(L12)X complex.

Functionally, forms part of the ribosomal stalk, playing a central role in the interaction of the ribosome with GTP-bound translation factors. This is Large ribosomal subunit protein uL10 from Nocardia farcinica (strain IFM 10152).